The sequence spans 307 residues: Aspartate carbamoyltransferase catalytic subunit (307 aa).

2 residues coordinate carbamoyl phosphate: Arg59 and Thr60. An L-aspartate-binding site is contributed by Lys87. Carbamoyl phosphate is bound by residues Arg109, His137, and Gln140. Residues Arg173 and Arg223 each coordinate L-aspartate. Positions 266 and 267 each coordinate carbamoyl phosphate.

Belongs to the aspartate/ornithine carbamoyltransferase superfamily. ATCase family. As to quaternary structure, heterododecamer (2C3:3R2) of six catalytic PyrB chains organized as two trimers (C3), and six regulatory PyrI chains organized as three dimers (R2).

It carries out the reaction carbamoyl phosphate + L-aspartate = N-carbamoyl-L-aspartate + phosphate + H(+). It participates in pyrimidine metabolism; UMP biosynthesis via de novo pathway; (S)-dihydroorotate from bicarbonate: step 2/3. Functionally, catalyzes the condensation of carbamoyl phosphate and aspartate to form carbamoyl aspartate and inorganic phosphate, the committed step in the de novo pyrimidine nucleotide biosynthesis pathway. The polypeptide is Aspartate carbamoyltransferase catalytic subunit (Helicobacter pylori (strain Shi470)).